Reading from the N-terminus, the 222-residue chain is MVIAIDGPSASGKSSIAKALGMRLGFKFISSGYFYRIITLIAQRFSLNEYDLLSESKILELVSQNDIKFNGFDFLLNGTNVISHILNERIDFQVSLYSSYIGVRNIVNKKLREIVKLKDDNYIIEGRDITTVVFPEAEVKIYLDASVKVRALRRYNQRSDNVTLNELEQALERRDEIDQNKEYGKLKLDKEVFYIDTSYKCLDDVCNIIIKTFNLKKKVIER.

An ATP-binding site is contributed by 7-15; the sequence is GPSASGKSS.

This sequence belongs to the cytidylate kinase family. Type 1 subfamily.

It localises to the cytoplasm. The catalysed reaction is CMP + ATP = CDP + ADP. It carries out the reaction dCMP + ATP = dCDP + ADP. This Borrelia turicatae (strain 91E135) protein is Cytidylate kinase.